A 412-amino-acid polypeptide reads, in one-letter code: Mast cell carboxypeptidase A (412 aa).

Residues 1–10 form the signal peptide; that stretch reads LMGVIYSTLA. Positions 11 to 104 are cleaved as a propeptide — activation peptide; it reads IAPVQFDREK…IDKQFDVKEE (94 aa). The Peptidase M14 domain occupies 113–407; it reads KYNDWNKIVS…LSVKFIAKYI (295 aa). Cystine bridges form between C168/C181 and C240/C263. Positions 171 and 174 each coordinate Zn(2+). Position 299 (H299) interacts with Zn(2+). E373 serves as the catalytic Proton donor/acceptor.

Belongs to the peptidase M14 family. The cofactor is Zn(2+).

The protein resides in the cytoplasmic vesicle. Its subcellular location is the secretory vesicle. It catalyses the reaction Release of a C-terminal amino acid, but little or no action with -Asp, -Glu, -Arg, -Lys or -Pro.. This is Mast cell carboxypeptidase A (Cpa3) from Rattus norvegicus (Rat).